The sequence spans 340 residues: Cysteinyl leukotriene receptor 1 (340 aa).

Over 1-31 the chain is Extracellular; the sequence is MDGVRNLTVSCASSNTCNDTIDDFRNQVYST. Residues asparagine 6 and asparagine 18 are each glycosylated (N-linked (GlcNAc...) asparagine). The helical transmembrane segment at 32 to 52 threads the bilayer; sequence LYSMITVVGFFGNGFVLYVLI. Residues 53–60 are Cytoplasmic-facing; sequence KTYHEKSA. Residues 61–81 traverse the membrane as a helical segment; that stretch reads YQVYMINLAVADLLCVCTLPL. Over 82–109 the chain is Extracellular; sequence RVVYYVHKGIWLFGDFLCRLSTYALYVN. An intrachain disulfide couples cysteine 99 to cysteine 176. Residues 110-130 form a helical membrane-spanning segment; the sequence is LYCSIFFMTAMSFFRCIAIVF. Residues 131-144 lie on the Cytoplasmic side of the membrane; it reads PVQNINLITHKKAK. A helical membrane pass occupies residues 145–165; that stretch reads IVCIAIWIFVILTSSPFLMST. The Extracellular portion of the chain corresponds to 166 to 196; it reads SYKDEKNNTKCFEPPQXNQAKYHVLVLHYVS. Asparagine 172 carries an N-linked (GlcNAc...) asparagine glycan. The chain crosses the membrane as a helical span at residues 197-217; it reads LFVGFIIPFVIIIVCYTMIIL. Over 218–233 the chain is Cytoplasmic; it reads TLLKNSMKKNISSRKK. A helical membrane pass occupies residues 234-254; the sequence is AIGMIIVVTAAFLISFMPYHI. Over 255–279 the chain is Extracellular; sequence QRTIHLHFLHNDTKHCDSVLRMQKS. An N-linked (GlcNAc...) asparagine glycan is attached at asparagine 265. Residues 280–300 form a helical membrane-spanning segment; the sequence is VXITLSLAASNCCFDPLLYFF. At 301–340 the chain is on the cytoplasmic side; it reads SGGNFREGLSTFRKHSLSTMTYVPKKKTSLPEKAQEIYKE.

It belongs to the G-protein coupled receptor 1 family.

Its subcellular location is the cell membrane. Its function is as follows. Receptor for cysteinyl leukotrienes mediating constriction of the microvascular smooth muscle during an inflammatory response. This response is mediated via a G-protein that activates a phosphatidylinositol-calcium second messenger system. This chain is Cysteinyl leukotriene receptor 1 (CYSLTR1), found in Sus scrofa (Pig).